Consider the following 176-residue polypeptide: Xanthine-guanine phosphoribosyltransferase (176 aa).

5-phospho-alpha-D-ribose 1-diphosphate is bound by residues 51-52 (RG) and 110-118 (DDLVDTGKT). Residue Asp111 coordinates Mg(2+). Guanine contacts are provided by Asp114 and Ile157. Residues Asp114 and Ile157 each coordinate xanthine. Residues 114–118 (DTGKT) and 156–157 (WI) contribute to the GMP site.

It belongs to the purine/pyrimidine phosphoribosyltransferase family. XGPT subfamily. In terms of assembly, homotetramer. The cofactor is Mg(2+).

The protein localises to the cell inner membrane. It carries out the reaction GMP + diphosphate = guanine + 5-phospho-alpha-D-ribose 1-diphosphate. The catalysed reaction is XMP + diphosphate = xanthine + 5-phospho-alpha-D-ribose 1-diphosphate. The enzyme catalyses IMP + diphosphate = hypoxanthine + 5-phospho-alpha-D-ribose 1-diphosphate. It participates in purine metabolism; GMP biosynthesis via salvage pathway; GMP from guanine: step 1/1. Its pathway is purine metabolism; XMP biosynthesis via salvage pathway; XMP from xanthine: step 1/1. Functionally, purine salvage pathway enzyme that catalyzes the transfer of the ribosyl-5-phosphate group from 5-phospho-alpha-D-ribose 1-diphosphate (PRPP) to the N9 position of the 6-oxopurines guanine and xanthine to form the corresponding ribonucleotides GMP (guanosine 5'-monophosphate) and XMP (xanthosine 5'-monophosphate), with the release of PPi. To a lesser extent, also acts on hypoxanthine. This is Xanthine-guanine phosphoribosyltransferase from Bradyrhizobium diazoefficiens (strain JCM 10833 / BCRC 13528 / IAM 13628 / NBRC 14792 / USDA 110).